Here is a 243-residue protein sequence, read N- to C-terminus: UPF0246 protein SAG2081 (243 aa).

It belongs to the UPF0246 family.

The protein is UPF0246 protein SAG2081 of Streptococcus agalactiae serotype V (strain ATCC BAA-611 / 2603 V/R).